Reading from the N-terminus, the 366-residue chain is tRNA/tmRNA (uracil-C(5))-methyltransferase (366 aa).

S-adenosyl-L-methionine is bound by residues Gln-190, Tyr-218, Asn-223, Glu-239, and Asp-299. Residue Cys-324 is the Nucleophile of the active site. Glu-358 acts as the Proton acceptor in catalysis.

It belongs to the class I-like SAM-binding methyltransferase superfamily. RNA M5U methyltransferase family. TrmA subfamily.

The enzyme catalyses uridine(54) in tRNA + S-adenosyl-L-methionine = 5-methyluridine(54) in tRNA + S-adenosyl-L-homocysteine + H(+). It carries out the reaction uridine(341) in tmRNA + S-adenosyl-L-methionine = 5-methyluridine(341) in tmRNA + S-adenosyl-L-homocysteine + H(+). Its function is as follows. Dual-specificity methyltransferase that catalyzes the formation of 5-methyluridine at position 54 (m5U54) in all tRNAs, and that of position 341 (m5U341) in tmRNA (transfer-mRNA). In Escherichia fergusonii (strain ATCC 35469 / DSM 13698 / CCUG 18766 / IAM 14443 / JCM 21226 / LMG 7866 / NBRC 102419 / NCTC 12128 / CDC 0568-73), this protein is tRNA/tmRNA (uracil-C(5))-methyltransferase.